The following is a 318-amino-acid chain: Thymidylate synthase (318 aa).

DUMP contacts are provided by residues arginine 25 and arginine 180–arginine 181. The active-site Nucleophile is cysteine 200. DUMP contacts are provided by residues arginine 220–aspartate 223, asparagine 231, and histidine 261–tyrosine 263. Residue aspartate 223 coordinates (6R)-5,10-methylene-5,6,7,8-tetrahydrofolate. Alanine 317 lines the (6R)-5,10-methylene-5,6,7,8-tetrahydrofolate pocket.

It belongs to the thymidylate synthase family. Bacterial-type ThyA subfamily. Homodimer.

It is found in the cytoplasm. It catalyses the reaction dUMP + (6R)-5,10-methylene-5,6,7,8-tetrahydrofolate = 7,8-dihydrofolate + dTMP. It functions in the pathway pyrimidine metabolism; dTTP biosynthesis. In terms of biological role, catalyzes the reductive methylation of 2'-deoxyuridine-5'-monophosphate (dUMP) to 2'-deoxythymidine-5'-monophosphate (dTMP) while utilizing 5,10-methylenetetrahydrofolate (mTHF) as the methyl donor and reductant in the reaction, yielding dihydrofolate (DHF) as a by-product. This enzymatic reaction provides an intracellular de novo source of dTMP, an essential precursor for DNA biosynthesis. This Bacillus cytotoxicus (strain DSM 22905 / CIP 110041 / 391-98 / NVH 391-98) protein is Thymidylate synthase.